The primary structure comprises 453 residues: Maltotriose-binding protein (453 aa).

Positions 1 to 29 are cleaved as a signal peptide; the sequence is MKRGIYAVLLVGVLIFSVVASGCIGGTQT. Over residues 27–65 the composition is skewed to low complexity; the sequence is TQTQTETQTPEKTQTPTTTQPSPTTTTSPTQTTSQTPTE. The interval 27–73 is disordered; that stretch reads TQTQTETQTPEKTQTPTTTQPSPTTTTSPTQTTSQTPTETETHTQEA.

Belongs to the bacterial solute-binding protein 1 family.

Functionally, involved in an abc transport system for maltotriose. This chain is Maltotriose-binding protein (malE), found in Pyrococcus abyssi (strain GE5 / Orsay).